A 390-amino-acid polypeptide reads, in one-letter code: 1-deoxy-D-xylulose 5-phosphate reductoisomerase (390 aa).

NADPH contacts are provided by Thr10, Gly11, Ser12, Ile13, Gly36, Asn38, and Asn124. Lys125 contacts 1-deoxy-D-xylulose 5-phosphate. NADPH is bound at residue Glu126. Asp150 is a Mn(2+) binding site. The 1-deoxy-D-xylulose 5-phosphate site is built by Ser151, Glu152, Ser176, and His199. Glu152 is a binding site for Mn(2+). Position 205 (Gly205) interacts with NADPH. Residues Ser212, Asn217, Lys218, and Glu221 each coordinate 1-deoxy-D-xylulose 5-phosphate. Glu221 is a Mn(2+) binding site.

The protein belongs to the DXR family. It depends on Mg(2+) as a cofactor. The cofactor is Mn(2+).

The catalysed reaction is 2-C-methyl-D-erythritol 4-phosphate + NADP(+) = 1-deoxy-D-xylulose 5-phosphate + NADPH + H(+). The protein operates within isoprenoid biosynthesis; isopentenyl diphosphate biosynthesis via DXP pathway; isopentenyl diphosphate from 1-deoxy-D-xylulose 5-phosphate: step 1/6. Functionally, catalyzes the NADPH-dependent rearrangement and reduction of 1-deoxy-D-xylulose-5-phosphate (DXP) to 2-C-methyl-D-erythritol 4-phosphate (MEP). This Microcystis aeruginosa (strain NIES-843 / IAM M-2473) protein is 1-deoxy-D-xylulose 5-phosphate reductoisomerase.